The primary structure comprises 443 residues: tRNA modification GTPase MnmE (443 aa).

Arginine 23, glutamate 82, and lysine 121 together coordinate (6S)-5-formyl-5,6,7,8-tetrahydrofolate. The TrmE-type G domain maps to 215-364 (GTSIVLAGHP…LKQFIQQWMQ (150 aa)). K(+) is bound at residue asparagine 225. GTP contacts are provided by residues 225-230 (NAGKSS), 244-250 (TDIPGTT), and 269-272 (DSAG). Mg(2+) is bound at residue serine 229. K(+)-binding residues include threonine 244, isoleucine 246, and threonine 249. Threonine 250 contacts Mg(2+). Lysine 443 is a binding site for (6S)-5-formyl-5,6,7,8-tetrahydrofolate.

Belongs to the TRAFAC class TrmE-Era-EngA-EngB-Septin-like GTPase superfamily. TrmE GTPase family. As to quaternary structure, homodimer. Heterotetramer of two MnmE and two MnmG subunits. K(+) serves as cofactor.

The protein localises to the cytoplasm. In terms of biological role, exhibits a very high intrinsic GTPase hydrolysis rate. Involved in the addition of a carboxymethylaminomethyl (cmnm) group at the wobble position (U34) of certain tRNAs, forming tRNA-cmnm(5)s(2)U34. This chain is tRNA modification GTPase MnmE, found in Chlamydia abortus (strain DSM 27085 / S26/3) (Chlamydophila abortus).